A 254-amino-acid polypeptide reads, in one-letter code: Sugar fermentation stimulation protein homolog (254 aa).

This sequence belongs to the SfsA family.

This Parasynechococcus marenigrum (strain WH8102) protein is Sugar fermentation stimulation protein homolog.